A 262-amino-acid chain; its full sequence is Ornithine carbamoyltransferase (262 aa).

Residues 3–7 (STRTR), Gln30, Arg54, and 81–84 (HPTQ) each bind carbamoyl phosphate. L-ornithine is bound by residues Asn114, Asp178, and 182 to 183 (SM). Residues 219 to 222 (HCLP) and Thr247 contribute to the carbamoyl phosphate site.

Belongs to the aspartate/ornithine carbamoyltransferase superfamily. OTCase family.

It localises to the cytoplasm. The catalysed reaction is carbamoyl phosphate + L-ornithine = L-citrulline + phosphate + H(+). It functions in the pathway amino-acid biosynthesis; L-arginine biosynthesis; L-arginine from L-ornithine and carbamoyl phosphate: step 1/3. Its function is as follows. Reversibly catalyzes the transfer of the carbamoyl group from carbamoyl phosphate (CP) to the N(epsilon) atom of ornithine (ORN) to produce L-citrulline. This Neisseria lactamica protein is Ornithine carbamoyltransferase (argF).